Consider the following 267-residue polypeptide: 4-hydroxy-tetrahydrodipicolinate reductase (267 aa).

Residues G8 to M13 and D34 contribute to the NAD(+) site. R35 contributes to the NADP(+) binding site. Residues G98–T100 and A122–F125 each bind NAD(+). Residue H155 is the Proton donor/acceptor of the active site. A (S)-2,3,4,5-tetrahydrodipicolinate-binding site is contributed by H156. The active-site Proton donor is the K159. G165–T166 is a binding site for (S)-2,3,4,5-tetrahydrodipicolinate.

The protein belongs to the DapB family.

It is found in the cytoplasm. It catalyses the reaction (S)-2,3,4,5-tetrahydrodipicolinate + NAD(+) + H2O = (2S,4S)-4-hydroxy-2,3,4,5-tetrahydrodipicolinate + NADH + H(+). The catalysed reaction is (S)-2,3,4,5-tetrahydrodipicolinate + NADP(+) + H2O = (2S,4S)-4-hydroxy-2,3,4,5-tetrahydrodipicolinate + NADPH + H(+). Its pathway is amino-acid biosynthesis; L-lysine biosynthesis via DAP pathway; (S)-tetrahydrodipicolinate from L-aspartate: step 4/4. In terms of biological role, catalyzes the conversion of 4-hydroxy-tetrahydrodipicolinate (HTPA) to tetrahydrodipicolinate. This Pseudomonas savastanoi pv. phaseolicola (strain 1448A / Race 6) (Pseudomonas syringae pv. phaseolicola (strain 1448A / Race 6)) protein is 4-hydroxy-tetrahydrodipicolinate reductase.